The following is a 122-amino-acid chain: MARIAGVNIPTNKRVLIALQYIHGIGQKNAADILEKVKIPLDRRVNQLSDAEVLQIREVIDRDYLVEGDLRRETGMNIKRLMDLGCYRGLRHRRGLPVRGQRTHTNARTRKGPAKAIAGKKK.

The tract at residues 99-122 (RGQRTHTNARTRKGPAKAIAGKKK) is disordered.

It belongs to the universal ribosomal protein uS13 family. Part of the 30S ribosomal subunit. Forms a loose heterodimer with protein S19. Forms two bridges to the 50S subunit in the 70S ribosome.

In terms of biological role, located at the top of the head of the 30S subunit, it contacts several helices of the 16S rRNA. In the 70S ribosome it contacts the 23S rRNA (bridge B1a) and protein L5 of the 50S subunit (bridge B1b), connecting the 2 subunits; these bridges are implicated in subunit movement. Contacts the tRNAs in the A and P-sites. This is Small ribosomal subunit protein uS13 from Rhodopseudomonas palustris (strain TIE-1).